A 77-amino-acid polypeptide reads, in one-letter code: UPF0337 protein CE0198 (77 aa).

A disordered region spans residues 1-77 (MGDLSNKAEG…PDVEHPEAVN (77 aa)). Composition is skewed to basic and acidic residues over residues 30 to 56 (DEGR…KDGA) and 64 to 77 (QDKD…EAVN).

It belongs to the UPF0337 (CsbD) family.

This chain is UPF0337 protein CE0198, found in Corynebacterium efficiens (strain DSM 44549 / YS-314 / AJ 12310 / JCM 11189 / NBRC 100395).